The chain runs to 1001 residues: Ulvan lyase, long isoform (1001 aa).

A signal peptide spans 1–21 (MNGLKMLLFSTTLLTAFTLHA). A substrate-binding site is contributed by 126–127 (SH). Residue H127 is the Proton donor/acceptor of the active site. The Ca(2+) site is built by D189, D199, and K201. Substrate-binding residues include Y280 and R297. Ca(2+) contacts are provided by D300, D303, and Y305. Y361 lines the substrate pocket.

The protein belongs to the polysaccharide lyase 24 family.

Its function is as follows. Ulvan lyase involved in ulvan degradation. Ulvan is the main polysaccharide component of the Ulvales (green seaweed) cell wall. It is composed of disaccharide building blocks comprising 3-sulfated rhamnose (Rha3S) linked to D-glucuronic acid (GlcA), L-iduronic acid (IduA), or D-xylose (Xyl). Ulvan lyase catalyzes preferentially the endolytic cleavage of the glycosidic bond between Rha3S and the uronic acid GlcA, but not IduA, producing oligosaccharides that have unsaturated 4-deoxy-L-threo-hex-4-enopyranosiduronic acid (deltaUA) at the non-reducing end. The most abundant end products in the degradation of the ulvan polysaccharide were deltaUA-Rha3S disaccharides and deltaUA-Rha3S-IduA-Rha3S and deltaUA-Rha3S-Xyl-Rha3S tetrasaccharides. The sequence is that of Ulvan lyase, long isoform from Pseudoalteromonas sp. (strain PLSV).